Consider the following 34-residue polypeptide: Omega-ctenitoxin-Pn2a (34 aa).

3 cysteine pairs are disulfide-bonded: Cys-2/Cys-16, Cys-9/Cys-26, and Cys-15/Cys-28.

The protein belongs to the neurotoxin 02 (plectoxin) family. 01 (Tx3) subfamily. Expressed by the venom gland.

It is found in the secreted. In terms of biological role, inhibits all known high-voltage activated calcium channels (L-, P/Q- and R-type currents) (Cav), and most effectively the P/Q- (Cav2.1/CACNA1A) and R-type (Cav2.3/CACNA1E) currents. In rat brain, inhibits glutamate release, neuronal death and loss of neurotransmission in the hippocampus resulting from ischemia. In vivo, induces rapid general flaccid paralysis followed by death in 10-30 minutes at dose levels of 5 ug per mouse. This chain is Omega-ctenitoxin-Pn2a, found in Phoneutria nigriventer (Brazilian armed spider).